The sequence spans 546 residues: Thermolysin (546 aa).

Positions 1–25 (MDKRAMLGAIGLAFGLMAWPFGASA) are cleaved as a signal peptide. The propeptide at 26 to 228 (KEKSMVWNEQ…EAKPGGGQPV (203 aa)) is activation peptide. Ca(2+)-binding residues include Asp-287, Asp-289, Gln-291, and Asp-368. Residue His-372 participates in Zn(2+) binding. Glu-373 is an active-site residue. Zn(2+) contacts are provided by His-376 and Glu-396. Ca(2+)-binding residues include Asn-413, Asp-415, Glu-417, Glu-420, Tyr-423, Thr-424, Ile-427, and Asp-430. Catalysis depends on His-461, which acts as the Proton donor.

This sequence belongs to the peptidase M4 family. It depends on Ca(2+) as a cofactor. Requires Zn(2+) as cofactor.

It is found in the secreted. The enzyme catalyses Preferential cleavage: Xaa-|-Leu &gt; Xaa-|-Phe.. Extracellular zinc metalloprotease. The sequence is that of Thermolysin (npr) from Bacillus caldolyticus.